Here is a 766-residue protein sequence, read N- to C-terminus: Leucine-rich repeat and fibronectin type III domain-containing protein 1 (766 aa).

Residues 1–31 (MAPGPFSSGLLSPPPAALPFLLLLWAGASRG) form the signal peptide. Positions 32–65 (QPCPGRCICQNVAPTLTMLCAKTGLLFVPPAIDR) constitute an LRRNT domain. Over 32-536 (QPCPGRCICQ…LRAHFLGGTM (505 aa)) the chain is Extracellular. LRR repeat units lie at residues 66–87 (RVVELRLTDNFIAAVRRRDFAN), 90–111 (SLVHLTLSRNTIGQVAAGAFAD), 114–135 (ALRALHLDSNRLAEVRGDQLRG), 138–159 (NLRHLILGNNQIRKVESAAFDA), 163–184 (TVEDLDLSYNNLEALPWEAVGQ), 187–208 (NLNTLTLDHNLIDHIAEGTFVQ), and 211–232 (KLVRLDMTSNRLHKLPPDGLFL). The N-linked (GlcNAc...) asparagine glycan is linked to N87. In terms of domain architecture, LRRCT spans 252–298 (NPLHCNCELLWLRRLTREDDLETCATPEHLTDRYFWSIPEEEFLCEP). An Ig-like domain is found at 299-386 (PLITRQAGGR…GEATAPVEVC (88 aa)). C321 and C370 form a disulfide bridge. An N-linked (GlcNAc...) asparagine glycan is attached at N343. A disordered region spans residues 397–422 (PAAPPPLTEPGSSDIATPGRPGANDS). The region spanning 424–520 (TERRLVAAEL…GCVQFTTAGD (97 aa)) is the Fibronectin type-III domain. Residues 537–557 (IIAIGGVIVASVLVFIVLLMI) form a helical membrane-spanning segment. At 558–766 (RYKVYGDGDS…STEWMLESTV (209 aa)) the chain is on the cytoplasmic side. Disordered stretches follow at residues 568–601 (RRIKGTSRSPPRVSHVCSQTNGSSAQQASAPPAP) and 646–742 (CLLP…GEDG). The residue at position 713 (S713) is a Phosphoserine. Residues 714-727 (YPRRARRTKRHRST) are compositionally biased toward basic residues.

It belongs to the LRFN family. In terms of assembly, forms heteromeric complexes with LRFN2, LRFN4 and LRFN5; binding to LRFN2 and LRFN5 may be weaker than that to LRFN4. Also interacts with LRFN3. Forms homomeric complexes, but not across cell junctions. Interacts with DLG1, DLG2 and DLG4, but not with MAGI2, not CASK. Interacts with DLG3. Interacts with 2 AMPA receptor subunits GRIA1 and GRIA2 and NMDA receptor subunit GRIN1. In terms of processing, glycosylated. Mainly expressed in brain (at protein level) and testis. In brain, found in cerebral cortex (including pyramidal neurons), hippocampus (including CA3 and CA1 neurons), dentate gyrus, cerebellum (including Purkinje neurons) (at protein level) (at protein level). Also expressed in the olfactory bulb.

The protein resides in the membrane. The protein localises to the synapse. It localises to the postsynaptic density membrane. Promotes neurite outgrowth in hippocampal neurons. Involved in the regulation of the differentiation and maintenance of excitatory synapses. Induces the clustering of excitatory postsynaptic proteins, including DLG4, DLGAP1, GRIA1 and GRIN1. The chain is Leucine-rich repeat and fibronectin type III domain-containing protein 1 (Lrfn1) from Rattus norvegicus (Rat).